Consider the following 349-residue polypeptide: Mitochondrial carrier protein SCaMC-3L (349 aa).

4 helical membrane passes run 88 to 104 (GALW…GAVS), 149 to 168 (GNGI…FSVF), 188 to 205 (LLAG…INPM), and 243 to 261 (YLPN…LAVY). Solcar repeat units lie at residues 88–174 (GALW…CKNY) and 182–267 (PPFQ…LNCL).

This sequence belongs to the mitochondrial carrier (TC 2.A.29) family.

It localises to the mitochondrion inner membrane. The enzyme catalyses Mg(2+)(out) + phosphate(in) + ATP(out) = Mg(2+)(in) + phosphate(out) + ATP(in). It catalyses the reaction ADP(out) + phosphate(in) + H(+)(out) = ADP(in) + phosphate(out) + H(+)(in). In terms of biological role, calcium-independent ATP-Mg/Pi exchanger that catalyzes the electroneutral exchange of Mg-ATP or free ADP against an hydrogenphosphate and participates in the net transport of adenine nucleotides across the mitochondria inner membrane. The polypeptide is Mitochondrial carrier protein SCaMC-3L (Bos taurus (Bovine)).